The following is a 763-amino-acid chain: uncharacterized protein (763 aa).

One can recognise a TR mART core domain in the interval 380-607; that stretch reads DSVLNPFNTN…YNIKVITMRL (228 aa). Residues 684–700 traverse the membrane as a helical segment; the sequence is SYVSIYALLCPLLTNIY.

The protein resides in the membrane. This is an uncharacterized protein from Acanthamoeba polyphaga mimivirus (APMV).